We begin with the raw amino-acid sequence, 838 residues long: pre-rRNA 2'-O-ribose RNA methyltransferase FTSJ3 (838 aa).

Residues glycine 56, tryptophan 58, aspartate 76, aspartate 92, and aspartate 117 each coordinate S-adenosyl-L-methionine. The active-site Proton acceptor is lysine 157. A disordered region spans residues 332–367; it reads ISLSSEEEEEGDEEEAVAETKQAPEEEEEREEEQLN. Phosphoserine occurs at positions 333, 335, and 336. Acidic residues predominate over residues 336–348; that stretch reads SEEEEEGDEEEAV. The residue at position 390 (arginine 390) is a Citrulline. A disordered region spans residues 453–482; it reads IYVSDAEDDDDTSLESDLDPEELAGVRTHS. A compositionally biased stretch (acidic residues) spans 457–474; that stretch reads DAEDDDDTSLESDLDPEE. Phosphoserine is present on residues serine 532 and serine 545. A disordered region spans residues 537-639; that stretch reads DADEALEISQ…GRGSKADEDG (103 aa). Residue lysine 571 forms a Glycyl lysine isopeptide (Lys-Gly) (interchain with G-Cter in SUMO2) linkage. Phosphoserine is present on serine 576. Glycyl lysine isopeptide (Lys-Gly) (interchain with G-Cter in SUMO2) cross-links involve residues lysine 634 and lysine 650. At serine 667 the chain carries Phosphoserine. Lysine 669 participates in a covalent cross-link: Glycyl lysine isopeptide (Lys-Gly) (interchain with G-Cter in SUMO2). The residue at position 679 (serine 679) is a Phosphoserine. Residue lysine 701 forms a Glycyl lysine isopeptide (Lys-Gly) (interchain with G-Cter in SUMO2) linkage. Positions 730–768 form a coiled coil; sequence IKKVAEAKARKKRRVLKKLEQTKKKAEAVVNTVDISERE. Arginine 774 is modified (citrulline). Basic residues predominate over residues 802-812; sequence VRRPAGVKGHF. Positions 802 to 838 are disordered; it reads VRRPAGVKGHFKVVDSRMKKDQRAQQRKEQKKKHKRK. Over residues 813–829 the composition is skewed to basic and acidic residues; the sequence is KVVDSRMKKDQRAQQRK.

The protein belongs to the class I-like SAM-binding methyltransferase superfamily. RNA methyltransferase RlmE family. SPB1 subfamily. As to quaternary structure, interacts with NIP7. In terms of processing, citrullinated by PADI4.

Its subcellular location is the nucleus. The protein resides in the nucleolus. It catalyses the reaction a ribonucleotide in rRNA + S-adenosyl-L-methionine = a 2'-O-methylribonucleotide in rRNA + S-adenosyl-L-homocysteine + H(+). Its function is as follows. RNA 2'-O-methyltransferase involved in the processing of the 34S pre-rRNA to 18S rRNA and in 40S ribosomal subunit formation. This Mus musculus (Mouse) protein is pre-rRNA 2'-O-ribose RNA methyltransferase FTSJ3 (Ftsj3).